A 4924-amino-acid chain; its full sequence is Hydroxamate-type ferrichrome siderophore peptide synthetase (4924 aa).

4 consecutive Carrier domains span residues 715 to 791, 2172 to 2246, 3254 to 3328, and 4402 to 4478; these read NQSE…ILLK, DGFQ…KRRR, NVVE…NTQT, and IHLN…QYEK. O-(pantetheine 4'-phosphoryl)serine occurs at positions 752, 2206, 3288, and 4439.

It belongs to the ATP-dependent AMP-binding enzyme family.

It localises to the cytoplasm. In terms of biological role, involved in intracellular and extracellular ferrichrome siderophore biosynthesis. This Schizosaccharomyces pombe (strain 972 / ATCC 24843) (Fission yeast) protein is Hydroxamate-type ferrichrome siderophore peptide synthetase (sib1).